A 424-amino-acid chain; its full sequence is Light-independent protochlorophyllide reductase subunit N (424 aa).

[4Fe-4S] cluster contacts are provided by Cys26, Cys51, and Cys112.

The protein belongs to the BchN/ChlN family. Protochlorophyllide reductase is composed of three subunits; BchL, BchN and BchB. Forms a heterotetramer of two BchB and two BchN subunits. [4Fe-4S] cluster serves as cofactor.

It carries out the reaction chlorophyllide a + oxidized 2[4Fe-4S]-[ferredoxin] + 2 ADP + 2 phosphate = protochlorophyllide a + reduced 2[4Fe-4S]-[ferredoxin] + 2 ATP + 2 H2O. The protein operates within porphyrin-containing compound metabolism; bacteriochlorophyll biosynthesis (light-independent). Component of the dark-operative protochlorophyllide reductase (DPOR) that uses Mg-ATP and reduced ferredoxin to reduce ring D of protochlorophyllide (Pchlide) to form chlorophyllide a (Chlide). This reaction is light-independent. The NB-protein (BchN-BchB) is the catalytic component of the complex. The chain is Light-independent protochlorophyllide reductase subunit N from Rhodobacter capsulatus (strain ATCC BAA-309 / NBRC 16581 / SB1003).